Consider the following 205-residue polypeptide: Large ribosomal subunit protein uL3 (205 aa).

The protein belongs to the universal ribosomal protein uL3 family. As to quaternary structure, part of the 50S ribosomal subunit. Forms a cluster with proteins L14 and L19.

Functionally, one of the primary rRNA binding proteins, it binds directly near the 3'-end of the 23S rRNA, where it nucleates assembly of the 50S subunit. The protein is Large ribosomal subunit protein uL3 of Parabacteroides distasonis (strain ATCC 8503 / DSM 20701 / CIP 104284 / JCM 5825 / NCTC 11152).